We begin with the raw amino-acid sequence, 300 residues long: 33 kDa chaperonin (300 aa).

Cystine bridges form between C247–C249 and C280–C283.

Belongs to the HSP33 family. In terms of processing, under oxidizing conditions two disulfide bonds are formed involving the reactive cysteines. Under reducing conditions zinc is bound to the reactive cysteines and the protein is inactive.

It is found in the cytoplasm. Its function is as follows. Redox regulated molecular chaperone. Protects both thermally unfolding and oxidatively damaged proteins from irreversible aggregation. Plays an important role in the bacterial defense system toward oxidative stress. The protein is 33 kDa chaperonin of Prochlorococcus marinus (strain MIT 9515).